A 657-amino-acid polypeptide reads, in one-letter code: MGSGPADEEHTVDTEPGVSPPRRTVGGRETVRAAVVVGALGVVFGDIGTSPIYTIQTVFNPEDPHPVPISTNNVYGVVSLIFWSVMLIVTATYVLLVMRADNDGEGGVMALITLLRRMGAVRGSRVTAVLAGLGIFGAALFFGDSMITPAISVLSAVEGLKVVEPGLEEWIVPITAVIIVALFSVQRRGTAAVGRLFGPVMIVWFVSIGACGVSGIARHPEILKALSPTYALSFFFGHFGIAFFALAAVVLAVTGAEALYADMGHFGRRAITRGWLVLVLPACVLSYLGQGALLLGDQSAVSSPFFLLAPGWARWPMVLLATAATVIASQAVITGAYSVASQAAQLGYLPRLRVAHTSESTIGQIYVPWINWVLMVSVLTLVFAFRSSAALAYAFGMAVTGTITITTLLFFYIVRTRWGTPLWLVVCGAGCLLAVDLLFLAANLTKLVHGAWLPLLIALTAFTVMTTWQRGRAIVTRARERAEGSLGDFVGQLHDYRPPLVRVPGTAVFLNRGKQTAPLAMRANVEHNRVLQQHVVIMSINTLPVPRVPDTERTEIDKLGYAEDGIVHVTAFFGYMDAPNIPDVLRLLDPAETEGPIAVDSASYFLSKIELTMGTAPTMATWRKRLFIATSYITADAAEYFGLPGERTVIMGSRIDV.

Residues 1-25 (MGSGPADEEHTVDTEPGVSPPRRTV) are disordered. Transmembrane regions (helical) follow at residues 35–55 (VVVG…IYTI), 77–97 (VVSL…VLLV), 127–147 (TAVL…DSMI), 165–185 (PGLE…LFSV), 196–216 (LFGP…VSGI), 234–254 (FFFG…LAVT), 275–295 (WLVL…ALLL), 315–335 (WPMV…VITG), 365–385 (IYVP…VFAF), 394–414 (AFGM…FYIV), 422–442 (LWLV…FLAA), and 447–467 (LVHG…VMTT).

Belongs to the HAK/KUP transporter (TC 2.A.72) family.

The protein resides in the cell membrane. The catalysed reaction is K(+)(in) + H(+)(in) = K(+)(out) + H(+)(out). Functionally, transport of potassium into the cell. Likely operates as a K(+):H(+) symporter. This chain is Probable potassium transport system protein Kup, found in Rhodococcus jostii (strain RHA1).